The sequence spans 1087 residues: Ubiquitin-associated protein 2-like (1087 aa).

An N-acetylmethionine modification is found at M1. The segment at 1–33 is disordered; the sequence is MMTSVGTNRARGNWEQPQNQNQTQHKQRPQATA. Residues 49-89 enclose the UBA domain; that stretch reads DFEEKVKQLIDITGKNQDECVIALHDCNGDVNRAINVLLEG. The disordered stretch occupies residues 92–234; it reads DTHSWEMVGK…TGHFEPDDGT (143 aa). A compositionally biased stretch (basic and acidic residues) spans 118-132; sequence EEGKENRDRDRDYSR. Residues 133–145 are compositionally biased toward basic residues; it reads RRGGPPRRGRGAS. Residues R187 and R190 each carry the asymmetric dimethylarginine modification. The segment covering 213–226 has biased composition (low complexity); it reads NYGNSSGNTWNNTG. Phosphoserine occurs at positions 356 and 360. Residues 377–389 show a composition bias toward low complexity; that stretch reads AQHSQSGSTTTSS. The disordered stretch occupies residues 377–420; the sequence is AQHSQSGSTTTSSWDMGSTTQSPSLVQYDLKNPSDSAVHSPFTK. Over residues 390-401 the composition is skewed to polar residues; that stretch reads WDMGSTTQSPSL. Residues S410 and S416 each carry the phosphoserine modification. T425 carries the phosphothreonine modification. A phosphoserine mark is found at S439, S454, S467, S470, S471, and S477. Disordered stretches follow at residues 440–493, 530–656, and 669–794; these read PAVA…KKAS, SDYE…IPPL, and TNQH…LPPG. 2 stretches are compositionally biased toward low complexity: residues 474–485 and 534–569; these read QSSSPQPAQQKL and STPTTSASSSQAPSSLYTSTASESSSTISSNQSQES. Polar residues predominate over residues 570–656; sequence GYQSGPIQST…SPSTSSIPPL (87 aa). S604, S605, S608, and S609 each carry phosphoserine. The segment covering 688-784 has biased composition (low complexity); it reads TTTTQHSSTL…STRSSVATTS (97 aa). A phosphoserine mark is found at S852 and S859. A disordered region spans residues 865-901; it reads FGRGDASSPAPATTLAQPQQNQTQTHHTTQQTFLNPA. The span at 873-896 shows a compositional bias: low complexity; the sequence is PAPATTLAQPQQNQTQTHHTTQQT. Residues S962 and V969 each carry the omega-N-methylarginine modification. V969 and T976 each carry N6-acetyllysine. Residues 1040 to 1087 are disordered; that stretch reads QQPHSQILHHHLQQDGQTGSGQRSQTSSIPQKPQTNKSAYNSYSWGAN. The span at 1053-1067 shows a compositional bias: low complexity; it reads QDGQTGSGQRSQTSS. A compositionally biased stretch (polar residues) spans 1068–1087; that stretch reads IPQKPQTNKSAYNSYSWGAN.

As to quaternary structure, interacts with BMI1. Part of a complex consisting of UBAP2L, BMI1 and RNF2. Interacts with G3BP1 (via NTF2 domain); promoting stress granule formation. Acetylated. As to expression, ubiquitous.

It localises to the nucleus. The protein resides in the chromosome. Its subcellular location is the cytoplasm. The protein localises to the stress granule. In terms of biological role, recruits the ubiquitination machinery to RNA polymerase II for polyubiquitination, removal and degradation, when the transcription-coupled nucleotide excision repair (TC-NER) machinery fails to resolve DNA damage. Plays an important role in the activity of long-term repopulating hematopoietic stem cells (LT-HSCs). Is a regulator of stress granule assembly, required for their efficient formation. Required for proper brain development and neocortex lamination. The protein is Ubiquitin-associated protein 2-like of Homo sapiens (Human).